A 437-amino-acid polypeptide reads, in one-letter code: Aminopeptidase W (437 aa).

Active-site residues include Cys-70, His-361, and Asn-382.

It belongs to the peptidase C1 family.

Its subcellular location is the cytoplasm. In Lactobacillus delbrueckii subsp. lactis, this protein is Aminopeptidase W (pepW).